Here is a 459-residue protein sequence, read N- to C-terminus: Glycosyl hydrolase family 109 protein 1 (459 aa).

The segment at residues 1-31 is a signal peptide (tat-type signal); sequence MHNIHRRHFLKAAGAVTAGLVTANIALNANA. NAD(+) is bound by residues 64 to 65, Asp-86, 135 to 138, 155 to 156, and Asn-184; these read ER, WEWH, and EV. Substrate is bound by residues Tyr-213, Arg-232, 244 to 247, and Tyr-326; that span reads YPTH. Position 244 (Tyr-244) interacts with NAD(+).

Belongs to the Gfo/Idh/MocA family. Glycosyl hydrolase 109 subfamily. It depends on NAD(+) as a cofactor. Post-translationally, predicted to be exported by the Tat system. The position of the signal peptide cleavage has not been experimentally proven.

In terms of biological role, glycosidase. This Shewanella sp. (strain ANA-3) protein is Glycosyl hydrolase family 109 protein 1.